An 83-amino-acid chain; its full sequence is Mitochondrial import inner membrane translocase subunit Tim8 B (83 aa).

Residue A2 is modified to N-acetylalanine. A Twin CX3C motif motif is present at residues 36 to 59 (CWDKCVEKPGSRLDSRTENCLSSC). Disulfide bonds link C36–C59 and C40–C55.

It belongs to the small Tim family. Heterohexamer; possibly composed of 3 copies of TIMM8B and 3 copies of TIMM13, named soluble 70 kDa complex. Associates with the TIM22 complex, whose core is composed of TIMM22.

The protein resides in the mitochondrion inner membrane. Its function is as follows. Probable mitochondrial intermembrane chaperone that participates in the import and insertion of some multi-pass transmembrane proteins into the mitochondrial inner membrane. Also required for the transfer of beta-barrel precursors from the TOM complex to the sorting and assembly machinery (SAM complex) of the outer membrane. Acts as a chaperone-like protein that protects the hydrophobic precursors from aggregation and guide them through the mitochondrial intermembrane space. The chain is Mitochondrial import inner membrane translocase subunit Tim8 B (Timm8b) from Mus musculus (Mouse).